Here is a 190-residue protein sequence, read N- to C-terminus: Putative resolvase R80 (190 aa).

The segment at residues 11–30 (SSVLGVHQRTLYQWDKKGWI) is a DNA-binding region (H-T-H motif). One can recognise a Resolvase/invertase-type recombinase catalytic domain in the interval 61–190 (LSICYVRVSS…RNGSRKYSNK (130 aa)). Positions 67–92 (RVSSNSQKDDLERQIKFMKKKYPNHT) form a coiled coil. Serine 69 acts as the O-(5'-phospho-DNA)-serine intermediate in catalysis.

Belongs to the site-specific recombinase resolvase family.

Its function is as follows. Resolvase catalyzes the resolution (a site-specific recombination) of the cointegrated replicon to yield the final transposition products. The polypeptide is Putative resolvase R80 (Acanthamoeba polyphaga mimivirus (APMV)).